Reading from the N-terminus, the 166-residue chain is MAKTLSKPASGALAPWLGISLIVILFDQLSKIAILKTFAYGAQHALTSFFNLVLVYNRGAAFGFLSTASGWQRWAFTALGVGATLVICFLLKRHGHQRLFSLSLALILGGALGNVIDRLVYGHVIDFLDFHLGGWHFPAFNLADSAITIGAVLLIYDELRRVRGAR.

4 helical membrane passes run 9–29, 45–65, 71–91, and 100–120; these read ASGA…FDQL, ALTS…FGFL, WQRW…CFLL, and FSLS…DRLV. Residues aspartate 126 and aspartate 144 contribute to the active site. Residues 135-155 form a helical membrane-spanning segment; that stretch reads WHFPAFNLADSAITIGAVLLI.

The protein belongs to the peptidase A8 family.

The protein localises to the cell inner membrane. The catalysed reaction is Release of signal peptides from bacterial membrane prolipoproteins. Hydrolyzes -Xaa-Yaa-Zaa-|-(S,diacylglyceryl)Cys-, in which Xaa is hydrophobic (preferably Leu), and Yaa (Ala or Ser) and Zaa (Gly or Ala) have small, neutral side chains.. It functions in the pathway protein modification; lipoprotein biosynthesis (signal peptide cleavage). Its function is as follows. This protein specifically catalyzes the removal of signal peptides from prolipoproteins. The chain is Lipoprotein signal peptidase from Burkholderia multivorans (strain ATCC 17616 / 249).